Consider the following 481-residue polypeptide: UDP-glucose 6-dehydrogenase 1 (481 aa).

NAD(+)-binding positions include G8–G13, D33, R38, V86–T90, S127–T128, and E162. Substrate-binding positions include E158–E162, K217–L224, and R257–G270. C273 (nucleophile) is an active-site residue. Position 273 to 276 (C273 to K276) interacts with NAD(+). F335–K336 is a substrate binding site. R343 is an NAD(+) binding site. At S394 the chain carries Phosphoserine. A substrate-binding site is contributed by R448.

This sequence belongs to the UDP-glucose/GDP-mannose dehydrogenase family.

The catalysed reaction is UDP-alpha-D-glucose + 2 NAD(+) + H2O = UDP-alpha-D-glucuronate + 2 NADH + 3 H(+). It functions in the pathway nucleotide-sugar biosynthesis; UDP-alpha-D-glucuronate biosynthesis; UDP-alpha-D-glucuronate from UDP-alpha-D-glucose: step 1/1. Involved in the biosynthesis of UDP-glucuronic acid (UDP-GlcA), providing nucleotide sugars for cell-wall polymers. The sequence is that of UDP-glucose 6-dehydrogenase 1 (UGD1) from Oryza sativa subsp. japonica (Rice).